Reading from the N-terminus, the 385-residue chain is MSKLDFVEAELEKRRAASRLRTLRPVAPADGAAVTINGARLLNVCSNDYLGLSCHPLLVERAQAFAAQWGAGATASRLVCGNYTCFDRVEEKLARLKQTPAALVLNSGYQANTTLLPALCDRDSLILSDRLNHNSIIMGCRLARCAVTLFDHNDPAHLEKLLVETANRGFSRRLIVTESVFSMDGDCCDMDALAGLAQAHDALLMVDEAHATGVFGEQGMGLTCGKPVDVVMGTFGKGCGSFGAYVACSSALRDFFVNRCAGFIYSTGLPPAVLGSIDAALDLVPAMDAERQTLLDNAAHLRVRLATFGFDTGASSSQILPVIVGSEQAALDLSRFLEGRGFLAVAIRPPSVPEAQSRIRVSLSALHTRADVDRLADAFGAWRRP.

R21 serves as a coordination point for substrate. 108-109 (GY) serves as a coordination point for pyridoxal 5'-phosphate. H133 provides a ligand contact to substrate. Pyridoxal 5'-phosphate is bound by residues S182, 207 to 210 (DEAH), and 234 to 237 (TFGK). The residue at position 237 (K237) is an N6-(pyridoxal phosphate)lysine. S351 is a substrate binding site.

This sequence belongs to the class-II pyridoxal-phosphate-dependent aminotransferase family. BioF subfamily. In terms of assembly, homodimer. Pyridoxal 5'-phosphate is required as a cofactor.

It catalyses the reaction 6-carboxyhexanoyl-[ACP] + L-alanine + H(+) = (8S)-8-amino-7-oxononanoate + holo-[ACP] + CO2. The protein operates within cofactor biosynthesis; biotin biosynthesis. Functionally, catalyzes the decarboxylative condensation of pimeloyl-[acyl-carrier protein] and L-alanine to produce 8-amino-7-oxononanoate (AON), [acyl-carrier protein], and carbon dioxide. In Desulfosudis oleivorans (strain DSM 6200 / JCM 39069 / Hxd3) (Desulfococcus oleovorans), this protein is Putative 8-amino-7-oxononanoate synthase (bioF).